Here is a 70-residue protein sequence, read N- to C-terminus: MAHPKAAEVRKLTDADITEQIDGIRRELFDLRFQQATRQLSNTHRFKESRTKLAQLLTVQKERSRSAAAS.

It belongs to the universal ribosomal protein uL29 family.

This is Large ribosomal subunit protein uL29 from Prochlorococcus marinus (strain MIT 9303).